Reading from the N-terminus, the 331-residue chain is Ketol-acid reductoisomerase (NADP(+)) (331 aa).

The 181-residue stretch at 2–182 folds into the KARI N-terminal Rossmann domain; that stretch reads AKMYYDSDCN…GAGRAGILET (181 aa). Residues 25-28, Ser51, and 83-86 contribute to the NADP(+) site; these read YGSQ and DEKQ. Residue His108 is part of the active site. Gly134 contributes to the NADP(+) binding site. The region spanning 183–329 is the KARI C-terminal knotted domain; that stretch reads TFREETETDL…AELRKMMSWL (147 aa). Mg(2+) contacts are provided by Asp191, Glu195, Glu227, and Glu231. Ser252 is a binding site for substrate.

It belongs to the ketol-acid reductoisomerase family. It depends on Mg(2+) as a cofactor.

It catalyses the reaction (2R)-2,3-dihydroxy-3-methylbutanoate + NADP(+) = (2S)-2-acetolactate + NADPH + H(+). It carries out the reaction (2R,3R)-2,3-dihydroxy-3-methylpentanoate + NADP(+) = (S)-2-ethyl-2-hydroxy-3-oxobutanoate + NADPH + H(+). The protein operates within amino-acid biosynthesis; L-isoleucine biosynthesis; L-isoleucine from 2-oxobutanoate: step 2/4. Its pathway is amino-acid biosynthesis; L-valine biosynthesis; L-valine from pyruvate: step 2/4. In terms of biological role, involved in the biosynthesis of branched-chain amino acids (BCAA). Catalyzes an alkyl-migration followed by a ketol-acid reduction of (S)-2-acetolactate (S2AL) to yield (R)-2,3-dihydroxy-isovalerate. In the isomerase reaction, S2AL is rearranged via a Mg-dependent methyl migration to produce 3-hydroxy-3-methyl-2-ketobutyrate (HMKB). In the reductase reaction, this 2-ketoacid undergoes a metal-dependent reduction by NADPH to yield (R)-2,3-dihydroxy-isovalerate. The polypeptide is Ketol-acid reductoisomerase (NADP(+)) (Ruminiclostridium cellulolyticum (strain ATCC 35319 / DSM 5812 / JCM 6584 / H10) (Clostridium cellulolyticum)).